The primary structure comprises 148 residues: Endothelial differentiation-related factor 1 (148 aa).

Ala2 bears the N-acetylalanine mark. At Ser4 the chain carries Phosphoserine. The residue at position 25 (Lys25) is an N6-methyllysine. A compositionally biased stretch (basic and acidic residues) spans 33-42; it reads RRGEDVETSK. The tract at residues 33 to 66 is disordered; the sequence is RRGEDVETSKKWAAGQNKQHSITKNTAKLDRETE. Residues 37 to 113 are interaction with NR5A2, PPARG and NR1H3; that stretch reads DVETSKKWAA…QVIADYESGR (77 aa). Polar residues predominate over residues 48 to 58; the sequence is QNKQHSITKNT. The interaction with TBP and NR5A1 stretch occupies residues 69–108; that stretch reads HHDRVTLEVGKVIQQGRQSKGLTQKDLATKINEKPQVIAD. The IQ motif motif lies at 81–88; it reads IQQGRQSK. The HTH cro/C1-type domain maps to 81–135; the sequence is IQQGRQSKGLTQKDLATKINEKPQVIADYESGRAIPNNQVLGKIERAIGLKLRGK. The H-T-H motif DNA-binding region spans 92–111; it reads QKDLATKINEKPQVIADYES.

In terms of assembly, interacts with TBP and the transcription factor IID (TFIID) complex, NR5A2, NR1H3 and PPARG. Interaction with TBP is regulated by phosphorylation. Binds NR5A1, ATF1, FOS and JUN via their conserved basic region. Binding to calmodulin is regulated by calcium and phosphorylation of the IQ motif. Post-translationally, phosphorylated (by PKA and PKC). As to expression, expressed in brain, liver, lung, kidney and heart (at protein level). Ubiquitously expressed. More abundant in heart, pancreas, liver, intestine and adipose tissues.

Its subcellular location is the cytoplasm. It localises to the nucleus. Transcriptional coactivator stimulating NR5A1 and ligand-dependent NR1H3/LXRA and PPARG transcriptional activities. Enhances the DNA-binding activity of ATF1, ATF2, CREB1 and NR5A1. Regulates nitric oxid synthase activity probably by sequestering calmodulin in the cytoplasm. May function in endothelial cells differentiation, hormone-induced cardiomyocytes hypertrophy and lipid metabolism. In Homo sapiens (Human), this protein is Endothelial differentiation-related factor 1 (EDF1).